Here is a 297-residue protein sequence, read N- to C-terminus: Probable endonuclease 4 (297 aa).

His-69, His-110, Glu-145, Asp-179, His-182, His-214, Asp-227, His-229, and Glu-259 together coordinate Zn(2+).

It belongs to the AP endonuclease 2 family. Zn(2+) is required as a cofactor.

The enzyme catalyses Endonucleolytic cleavage to 5'-phosphooligonucleotide end-products.. In terms of biological role, endonuclease IV plays a role in DNA repair. It cleaves phosphodiester bonds at apurinic or apyrimidinic (AP) sites, generating a 3'-hydroxyl group and a 5'-terminal sugar phosphate. This Listeria monocytogenes serovar 1/2a (strain ATCC BAA-679 / EGD-e) protein is Probable endonuclease 4.